Consider the following 183-residue polypeptide: Cuticle protein 2 (183 aa).

Residues 1–15 form the signal peptide; the sequence is MKLIVVAALIGVCAG. The 64-residue stretch at 58–121 folds into the Chitin-binding type R&amp;R domain; that stretch reads SQGFQYVYDT…AQGAHLPTPP (64 aa).

The protein is Cuticle protein 2 of Lonomia obliqua (Moth).